Here is a 701-residue protein sequence, read N- to C-terminus: Elongation factor G 2 (701 aa).

In terms of domain architecture, tr-type G spans 8–291 (ERYRNIGISA…AVIDYLPSPA (284 aa)). Residues 17-24 (AHIDAGKT), 88-92 (DTPGH), and 142-145 (NKMD) contribute to the GTP site.

The protein belongs to the TRAFAC class translation factor GTPase superfamily. Classic translation factor GTPase family. EF-G/EF-2 subfamily.

The protein resides in the cytoplasm. Functionally, catalyzes the GTP-dependent ribosomal translocation step during translation elongation. During this step, the ribosome changes from the pre-translocational (PRE) to the post-translocational (POST) state as the newly formed A-site-bound peptidyl-tRNA and P-site-bound deacylated tRNA move to the P and E sites, respectively. Catalyzes the coordinated movement of the two tRNA molecules, the mRNA and conformational changes in the ribosome. The chain is Elongation factor G 2 from Burkholderia lata (strain ATCC 17760 / DSM 23089 / LMG 22485 / NCIMB 9086 / R18194 / 383).